The primary structure comprises 198 residues: Neutrophil gelatinase-associated lipocalin (198 aa).

Residues 1-20 form the signal peptide; it reads MGLGVLCLALVLLGVLQSQA. Residue Q21 is modified to Pyrrolidone carboxylic acid. A carboxymycobactin is bound at residue 72-74; that stretch reads YST. N-linked (GlcNAc...) asparagine glycosylation is present at N85. A disulfide bridge links C96 with C195. Y126 lines the enterobactin pocket. K145, K154, and Y158 together coordinate a carboxymycobactin. K154 serves as a coordination point for enterobactin.

The protein belongs to the calycin superfamily. Lipocalin family. As to quaternary structure, monomer. Homodimer; disulfide-linked. Heterodimer; disulfide-linked with MMP9. As to expression, detected in the ureteric bud in embryonic kidney (at protein level).

It localises to the secreted. The protein localises to the cytoplasmic granule lumen. Its subcellular location is the cytoplasmic vesicle lumen. Functionally, iron-trafficking protein involved in multiple processes such as apoptosis, innate immunity and renal development. Binds iron through association with 2,3-dihydroxybenzoic acid (2,3-DHBA), a siderophore that shares structural similarities with bacterial enterobactin, and delivers or removes iron from the cell, depending on the context. Iron-bound form (holo-24p3) is internalized following binding to the SLC22A17 (24p3R) receptor, leading to release of iron and subsequent increase of intracellular iron concentration. In contrast, association of the iron-free form (apo-24p3) with the SLC22A17 (24p3R) receptor is followed by association with an intracellular siderophore, iron chelation and iron transfer to the extracellular medium, thereby reducing intracellular iron concentration. Involved in apoptosis due to interleukin-3 (IL3) deprivation: iron-loaded form increases intracellular iron concentration without promoting apoptosis, while iron-free form decreases intracellular iron levels, inducing expression of the proapoptotic protein BCL2L11/BIM, resulting in apoptosis. Involved in innate immunity; limits bacterial proliferation by sequestering iron bound to microbial siderophores, such as enterobactin. Can also bind siderophores from M.tuberculosis. This Rattus norvegicus (Rat) protein is Neutrophil gelatinase-associated lipocalin (Lcn2).